Reading from the N-terminus, the 200-residue chain is 2-phospho-L-lactate guanylyltransferase (200 aa).

The protein belongs to the CofC family. In terms of assembly, homodimer.

The enzyme catalyses (2S)-2-phospholactate + GTP + H(+) = (2S)-lactyl-2-diphospho-5'-guanosine + diphosphate. It participates in cofactor biosynthesis; coenzyme F420 biosynthesis. Guanylyltransferase that catalyzes the activation of (2S)-2-phospholactate (2-PL) as (2S)-lactyl-2-diphospho-5'-guanosine, via the condensation of 2-PL with GTP. It is involved in the biosynthesis of coenzyme F420, a hydride carrier cofactor. The chain is 2-phospho-L-lactate guanylyltransferase from Ferroglobus placidus (strain DSM 10642 / AEDII12DO).